The chain runs to 899 residues: Protein translocase subunit SecA (899 aa).

Residues Gln-87, 105–109 (GEGKT), and Asp-516 contribute to the ATP site. Residues Cys-884, Cys-886, Cys-895, and His-896 each coordinate Zn(2+).

It belongs to the SecA family. In terms of assembly, monomer and homodimer. Part of the essential Sec protein translocation apparatus which comprises SecA, SecYEG and auxiliary proteins SecDF. Other proteins may also be involved. The cofactor is Zn(2+).

It localises to the cell inner membrane. The protein localises to the cytoplasm. The enzyme catalyses ATP + H2O + cellular proteinSide 1 = ADP + phosphate + cellular proteinSide 2.. In terms of biological role, part of the Sec protein translocase complex. Interacts with the SecYEG preprotein conducting channel. Has a central role in coupling the hydrolysis of ATP to the transfer of proteins into and across the cell membrane, serving as an ATP-driven molecular motor driving the stepwise translocation of polypeptide chains across the membrane. The sequence is that of Protein translocase subunit SecA from Borreliella afzelii (strain PKo) (Borrelia afzelii).